A 415-amino-acid polypeptide reads, in one-letter code: Serine hydroxymethyltransferase (415 aa).

(6S)-5,6,7,8-tetrahydrofolate is bound by residues Leu-117 and 121-123; that span reads GHL. Lys-226 is subject to N6-(pyridoxal phosphate)lysine. (6S)-5,6,7,8-tetrahydrofolate contacts are provided by residues Glu-241 and 349–351; that span reads SPF.

Belongs to the SHMT family. Homodimer. The cofactor is pyridoxal 5'-phosphate.

It localises to the cytoplasm. The catalysed reaction is (6R)-5,10-methylene-5,6,7,8-tetrahydrofolate + glycine + H2O = (6S)-5,6,7,8-tetrahydrofolate + L-serine. Its pathway is one-carbon metabolism; tetrahydrofolate interconversion. It participates in amino-acid biosynthesis; glycine biosynthesis; glycine from L-serine: step 1/1. Its function is as follows. Catalyzes the reversible interconversion of serine and glycine with tetrahydrofolate (THF) serving as the one-carbon carrier. This reaction serves as the major source of one-carbon groups required for the biosynthesis of purines, thymidylate, methionine, and other important biomolecules. Also exhibits THF-independent aldolase activity toward beta-hydroxyamino acids, producing glycine and aldehydes, via a retro-aldol mechanism. The polypeptide is Serine hydroxymethyltransferase (Geobacter metallireducens (strain ATCC 53774 / DSM 7210 / GS-15)).